Here is a 470-residue protein sequence, read N- to C-terminus: MSFSRRQFLQASGIALCAGAIPLRANAAGQQQPLPVPPLLESRRGQPLFMTLQRAHWSFTQGTRAPVWGVNGRYLGPTIRVWKGDDVKLIYSNRLAENVSMTVAGLLVPGPLMGGPARMMSPNADWAPVLPIRQSAATLWYHANTPNRTAQQVYNGLAGMWLVEDDISKTLPIPNHYGVDDFPVIIQDKRLDNFGTPEYSEPGSGGFVGDTLLVNGAQSPYVEVSRGWVRLRLLNASNSRRYQLQMSDGRALHVISGDQGFLPAPVSVKQLSLAPGERREILVDMTNGDEVSITCGEAASIVDRIRGFFEPSSILVSTLVLTLRPTGLLPLVTDNLPMRLLPTEIMSGAPVRSRDISLGDDPGINGQLWDVNRIDITAQQGTWERWTVRADMPQSFHIEGVSFLIRNVNGAMPFPEDRGWKDTVWVDGQVELLVYYGQPSWPHFPFYFNSQTLEMADRGSIGQMLVNPAS.

Residues 1 to 27 constitute a signal peptide (tat-type signal); the sequence is MSFSRRQFLQASGIALCAGAIPLRANA. The region spanning 222–287 is the Plastocyanin-like domain; sequence VEVSRGWVRL…RREILVDMTN (66 aa).

It belongs to the FtsP family. Post-translationally, predicted to be exported by the Tat system. The position of the signal peptide cleavage has not been experimentally proven.

It localises to the periplasm. Functionally, cell division protein that is required for growth during stress conditions. May be involved in protecting or stabilizing the divisomal assembly under conditions of stress. The chain is Cell division protein FtsP from Salmonella typhi.